The sequence spans 285 residues: tRNA (adenine(58)-N(1))-methyltransferase catalytic subunit TRMT61A (285 aa).

At serine 2 the chain carries N-acetylserine. Substrate stretches follow at residues leucine 20–histidine 22, glutamine 35–valine 42, glycine 64–tryptophan 65, glutamine 85–serine 89, and serine 110–valine 117. S-adenosyl-L-methionine-binding positions include leucine 87, serine 114–serine 116, glutamate 135, arginine 140, aspartate 163–valine 164, and aspartate 181. 2 substrate regions span residues leucine 180–proline 183 and serine 205–glutamine 212. Residue threonine 274 coordinates substrate.

Belongs to the class I-like SAM-binding methyltransferase superfamily. TRM61 family. Heterotetramer; composed of two copies of TRMT6 and two copies of TRMT61A.

The protein localises to the nucleus. It catalyses the reaction adenosine(58) in tRNA + S-adenosyl-L-methionine = N(1)-methyladenosine(58) in tRNA + S-adenosyl-L-homocysteine + H(+). It carries out the reaction an adenosine in mRNA + S-adenosyl-L-methionine = an N(1)-methyladenosine in mRNA + S-adenosyl-L-homocysteine + H(+). Catalytic subunit of tRNA (adenine-N(1)-)-methyltransferase, which catalyzes the formation of N(1)-methyladenine at position 58 (m1A58) in initiator methionyl-tRNA. Catalytic subunit of mRNA N(1)-methyltransferase complex, which mediates methylation of adenosine residues at the N(1) position of a small subset of mRNAs: N(1) methylation takes place in tRNA T-loop-like structures of mRNAs and is only present at low stoichiometries. The protein is tRNA (adenine(58)-N(1))-methyltransferase catalytic subunit TRMT61A (TRMT61A) of Bos taurus (Bovine).